Reading from the N-terminus, the 259-residue chain is Electron transfer flavoprotein subunit beta (259 aa).

This sequence belongs to the ETF beta-subunit/FixA family. In terms of assembly, heterodimer of an alpha and a beta subunit. The cofactor is FAD. AMP serves as cofactor.

The electron transfer flavoprotein serves as a specific electron acceptor for other dehydrogenases. It transfers the electrons to the main respiratory chain via ETF-ubiquinone oxidoreductase (ETF dehydrogenase). The protein is Electron transfer flavoprotein subunit beta (etfB) of Clostridium acetobutylicum (strain ATCC 824 / DSM 792 / JCM 1419 / IAM 19013 / LMG 5710 / NBRC 13948 / NRRL B-527 / VKM B-1787 / 2291 / W).